A 550-amino-acid polypeptide reads, in one-letter code: Glucose-6-phosphate isomerase (550 aa).

Glu356 (proton donor) is an active-site residue. Active-site residues include His387 and Lys515.

The protein belongs to the GPI family.

It is found in the cytoplasm. The catalysed reaction is alpha-D-glucose 6-phosphate = beta-D-fructose 6-phosphate. The protein operates within carbohydrate biosynthesis; gluconeogenesis. Its pathway is carbohydrate degradation; glycolysis; D-glyceraldehyde 3-phosphate and glycerone phosphate from D-glucose: step 2/4. Functionally, catalyzes the reversible isomerization of glucose-6-phosphate to fructose-6-phosphate. This is Glucose-6-phosphate isomerase from Aliivibrio fischeri (strain MJ11) (Vibrio fischeri).